The chain runs to 120 residues: Chaperonin GroEL (120 aa).

23-27 (DGTTT) is a binding site for ATP.

It belongs to the chaperonin (HSP60) family. As to quaternary structure, forms a cylinder of 14 subunits composed of two heptameric rings stacked back-to-back. Interacts with the co-chaperonin GroES.

It localises to the cytoplasm. The catalysed reaction is ATP + H2O + a folded polypeptide = ADP + phosphate + an unfolded polypeptide.. Its function is as follows. Together with its co-chaperonin GroES, plays an essential role in assisting protein folding. The GroEL-GroES system forms a nano-cage that allows encapsulation of the non-native substrate proteins and provides a physical environment optimized to promote and accelerate protein folding. This Mycolicibacter nonchromogenicus (Mycobacterium nonchromogenicum) protein is Chaperonin GroEL.